The chain runs to 318 residues: NADH-ubiquinone oxidoreductase chain 1 (318 aa).

8 helical membrane passes run 2 to 22 (FTIN…FLTL), 70 to 90 (MFII…IPLP), 100 to 120 (LGVL…LWSG), 146 to 166 (LAII…STLI), 171 to 191 (HLWL…STLA), 222 to 242 (LFFM…TILF), 254 to 276 (LYTI…IRAS), and 294 to 314 (LPLT…TSSI).

The protein belongs to the complex I subunit 1 family. In terms of assembly, core subunit of respiratory chain NADH dehydrogenase (Complex I) which is composed of 45 different subunits.

The protein resides in the mitochondrion inner membrane. It catalyses the reaction a ubiquinone + NADH + 5 H(+)(in) = a ubiquinol + NAD(+) + 4 H(+)(out). Functionally, core subunit of the mitochondrial membrane respiratory chain NADH dehydrogenase (Complex I) which catalyzes electron transfer from NADH through the respiratory chain, using ubiquinone as an electron acceptor. Essential for the catalytic activity and assembly of complex I. In Ceratotherium simum (White rhinoceros), this protein is NADH-ubiquinone oxidoreductase chain 1 (MT-ND1).